We begin with the raw amino-acid sequence, 155 residues long: 6,7-dimethyl-8-ribityllumazine synthase (155 aa).

Residues phenylalanine 23, 57-59 (AFE), and 81-83 (AVI) contribute to the 5-amino-6-(D-ribitylamino)uracil site. 86–87 (ST) lines the (2S)-2-hydroxy-3-oxobutyl phosphate pocket. Residue histidine 89 is the Proton donor of the active site. Phenylalanine 114 provides a ligand contact to 5-amino-6-(D-ribitylamino)uracil. Arginine 128 is a (2S)-2-hydroxy-3-oxobutyl phosphate binding site.

The protein belongs to the DMRL synthase family.

It catalyses the reaction (2S)-2-hydroxy-3-oxobutyl phosphate + 5-amino-6-(D-ribitylamino)uracil = 6,7-dimethyl-8-(1-D-ribityl)lumazine + phosphate + 2 H2O + H(+). It participates in cofactor biosynthesis; riboflavin biosynthesis; riboflavin from 2-hydroxy-3-oxobutyl phosphate and 5-amino-6-(D-ribitylamino)uracil: step 1/2. In terms of biological role, catalyzes the formation of 6,7-dimethyl-8-ribityllumazine by condensation of 5-amino-6-(D-ribitylamino)uracil with 3,4-dihydroxy-2-butanone 4-phosphate. This is the penultimate step in the biosynthesis of riboflavin. This chain is 6,7-dimethyl-8-ribityllumazine synthase, found in Trichlorobacter lovleyi (strain ATCC BAA-1151 / DSM 17278 / SZ) (Geobacter lovleyi).